A 370-amino-acid chain; its full sequence is tRNA-specific 2-thiouridylase MnmA (370 aa).

ATP contacts are provided by residues 10–17 and M36; that span reads AMSGGVDS. Residue C111 is the Nucleophile of the active site. A disulfide bridge connects residues C111 and C209. G135 is a binding site for ATP. The interval 159–161 is interaction with tRNA; it reads KDQ. The active-site Cysteine persulfide intermediate is the C209.

This sequence belongs to the MnmA/TRMU family.

Its subcellular location is the cytoplasm. It carries out the reaction S-sulfanyl-L-cysteinyl-[protein] + uridine(34) in tRNA + AH2 + ATP = 2-thiouridine(34) in tRNA + L-cysteinyl-[protein] + A + AMP + diphosphate + H(+). In terms of biological role, catalyzes the 2-thiolation of uridine at the wobble position (U34) of tRNA, leading to the formation of s(2)U34. This chain is tRNA-specific 2-thiouridylase MnmA, found in Koribacter versatilis (strain Ellin345).